A 279-amino-acid polypeptide reads, in one-letter code: Tryptophan 2,3-dioxygenase (279 aa).

Residues 48 to 52 (FIIQH), Y110, and R114 each bind substrate. H237 is a heme binding site. Residue T251 participates in substrate binding.

This sequence belongs to the tryptophan 2,3-dioxygenase family. As to quaternary structure, homotetramer. Heme serves as cofactor.

The catalysed reaction is L-tryptophan + O2 = N-formyl-L-kynurenine. It participates in amino-acid degradation; L-tryptophan degradation via kynurenine pathway; L-kynurenine from L-tryptophan: step 1/2. Functionally, heme-dependent dioxygenase that catalyzes the oxidative cleavage of the L-tryptophan (L-Trp) pyrrole ring and converts L-tryptophan to N-formyl-L-kynurenine. Catalyzes the oxidative cleavage of the indole moiety. This chain is Tryptophan 2,3-dioxygenase, found in Bradyrhizobium sp. (strain ORS 278).